Reading from the N-terminus, the 1755-residue chain is Transposon Ty1-PL Gag-Pol polyprotein (1755 aa).

Composition is skewed to polar residues over residues 1–23 (MESQ…SVTS), 48–60 (TKAN…TPAS), and 127–152 (QSQF…GNTF). 3 disordered regions span residues 1–93 (MESQ…MMTQ), 126–174 (PQSQ…PPPM), and 352–421 (GSRN…SKST). The span at 153–165 (TDSSSADSDMTST) shows a compositional bias: low complexity. The RNA-binding stretch occupies residues 299–401 (NNGIHINNKV…NSKSKTARAH (103 aa)). Residues 402–418 (NVSTSNNSPSTDNDSIS) show a composition bias toward low complexity. Residue Ser416 is modified to Phosphoserine. Catalysis depends on Asp461, which acts as the For protease activity; shared with dimeric partner. The segment at 583–640 (NVHTSESTRKYPYPFIHRMLAHANAQTIRYSLKNNTITYFNESDVDWSSAIDYQCPDC) is integrase-type zinc finger-like. The Integrase catalytic domain maps to 660-835 (NSYEPFQYLH…AGLDISTLLP (176 aa)). The Mg(2+) site is built by Asp671 and Asp736. Disordered stretches follow at residues 956-1087 (SKAV…ETEK), 1092-1111 (RSPS…NIVP), and 1130-1187 (DLPL…DNET). Over residues 960-969 (SPTDSTPPST) the composition is skewed to low complexity. Residues 1005-1015 (STPQISNIEST) show a composition bias toward polar residues. Residues 1038 to 1053 (ESSHASKSKDFRHSDS) show a composition bias toward basic and acidic residues. Polar residues-rich tracts occupy residues 1054-1082 (YSEN…QISD) and 1101-1111 (PENNSSHNIVP). Positions 1178 to 1212 (KKRSLEDNETEIKVSRDTWNTKNMRSLEPPRSKKR) match the Bipartite nuclear localization signal motif. Residues 1338 to 1476 (NNYYITQLDI…DILGLEIKYQ (139 aa)) form the Reverse transcriptase Ty1/copia-type domain. Mg(2+) contacts are provided by Asp1346, Asp1427, Asp1428, Asp1610, Glu1652, and Asp1685. The region spanning 1610 to 1752 (DASYGNQPYY…IKTFKLLTNK (143 aa)) is the RNase H Ty1/copia-type domain.

The capsid protein forms a homotrimer, from which the VLPs are assembled. The protease is a homodimer, whose active site consists of two apposed aspartic acid residues. Post-translationally, initially, virus-like particles (VLPs) are composed of the structural unprocessed proteins Gag and Gag-Pol, and also contain the host initiator methionine tRNA (tRNA(i)-Met) which serves as a primer for minus-strand DNA synthesis, and a dimer of genomic Ty RNA. Processing of the polyproteins occurs within the particle and proceeds by an ordered pathway, called maturation. First, the protease (PR) is released by autocatalytic cleavage of the Gag-Pol polyprotein yielding capsid protein p45 and a Pol-p154 precursor protein. This cleavage is a prerequisite for subsequent processing of Pol-p154 at the remaining sites to release the mature structural and catalytic proteins. Maturation takes place prior to the RT reaction and is required to produce transposition-competent VLPs.

Its subcellular location is the cytoplasm. It localises to the nucleus. It catalyses the reaction DNA(n) + a 2'-deoxyribonucleoside 5'-triphosphate = DNA(n+1) + diphosphate. It carries out the reaction Endonucleolytic cleavage to 5'-phosphomonoester.. Its function is as follows. Capsid protein (CA) is the structural component of the virus-like particle (VLP), forming the shell that encapsulates the retrotransposons dimeric RNA genome. The particles are assembled from trimer-clustered units and there are holes in the capsid shells that allow for the diffusion of macromolecules. CA also has nucleocapsid-like chaperone activity, promoting primer tRNA(i)-Met annealing to the multipartite primer-binding site (PBS), dimerization of Ty1 RNA and initiation of reverse transcription. The aspartyl protease (PR) mediates the proteolytic cleavages of the Gag and Gag-Pol polyproteins after assembly of the VLP. Functionally, reverse transcriptase/ribonuclease H (RT) is a multifunctional enzyme that catalyzes the conversion of the retro-elements RNA genome into dsDNA within the VLP. The enzyme displays a DNA polymerase activity that can copy either DNA or RNA templates, and a ribonuclease H (RNase H) activity that cleaves the RNA strand of RNA-DNA heteroduplexes during plus-strand synthesis and hydrolyzes RNA primers. The conversion leads to a linear dsDNA copy of the retrotransposon that includes long terminal repeats (LTRs) at both ends. In terms of biological role, integrase (IN) targets the VLP to the nucleus, where a subparticle preintegration complex (PIC) containing at least integrase and the newly synthesized dsDNA copy of the retrotransposon must transit the nuclear membrane. Once in the nucleus, integrase performs the integration of the dsDNA into the host genome. The chain is Transposon Ty1-PL Gag-Pol polyprotein (TY1B-PL) from Saccharomyces cerevisiae (strain ATCC 204508 / S288c) (Baker's yeast).